The following is a 215-amino-acid chain: Guanylate kinase (215 aa).

Residues 11-189 (GNVFMVVAPS…ALTELVQIIS (179 aa)) enclose the Guanylate kinase-like domain. Residue 18–25 (APSGAGKS) participates in ATP binding.

Belongs to the guanylate kinase family.

The protein resides in the cytoplasm. The catalysed reaction is GMP + ATP = GDP + ADP. Functionally, essential for recycling GMP and indirectly, cGMP. This Bordetella bronchiseptica (strain ATCC BAA-588 / NCTC 13252 / RB50) (Alcaligenes bronchisepticus) protein is Guanylate kinase.